The sequence spans 320 residues: Cytochrome f (320 aa).

The signal sequence occupies residues 1–35; sequence MQTRNAFSWLKKQITRSISVSLMIYILTRTSISSA. Heme contacts are provided by Tyr-36, Cys-56, Cys-59, and His-60. A helical membrane pass occupies residues 286 to 305; the sequence is VQGLLFFLASVILAQIFLVL.

Belongs to the cytochrome f family. The 4 large subunits of the cytochrome b6-f complex are cytochrome b6, subunit IV (17 kDa polypeptide, petD), cytochrome f and the Rieske protein, while the 4 small subunits are PetG, PetL, PetM and PetN. The complex functions as a dimer. The cofactor is heme.

The protein localises to the plastid. The protein resides in the chloroplast thylakoid membrane. Its function is as follows. Component of the cytochrome b6-f complex, which mediates electron transfer between photosystem II (PSII) and photosystem I (PSI), cyclic electron flow around PSI, and state transitions. This chain is Cytochrome f, found in Atropa belladonna (Belladonna).